A 192-amino-acid polypeptide reads, in one-letter code: Orotate phosphoribosyltransferase (192 aa).

116–124 (EDIVTTGLS) provides a ligand contact to 5-phospho-alpha-D-ribose 1-diphosphate. Orotate is bound by residues T120 and R148.

Belongs to the purine/pyrimidine phosphoribosyltransferase family. PyrE subfamily. As to quaternary structure, homodimer. It depends on Mg(2+) as a cofactor.

The catalysed reaction is orotidine 5'-phosphate + diphosphate = orotate + 5-phospho-alpha-D-ribose 1-diphosphate. The protein operates within pyrimidine metabolism; UMP biosynthesis via de novo pathway; UMP from orotate: step 1/2. Its function is as follows. Catalyzes the transfer of a ribosyl phosphate group from 5-phosphoribose 1-diphosphate to orotate, leading to the formation of orotidine monophosphate (OMP). The protein is Orotate phosphoribosyltransferase of Bartonella henselae (strain ATCC 49882 / DSM 28221 / CCUG 30454 / Houston 1) (Rochalimaea henselae).